A 295-amino-acid chain; its full sequence is Ribosomal protein L11 methyltransferase (295 aa).

Residues Thr146, Gly167, Asp189, and Asn231 each contribute to the S-adenosyl-L-methionine site.

The protein belongs to the methyltransferase superfamily. PrmA family.

It localises to the cytoplasm. The enzyme catalyses L-lysyl-[protein] + 3 S-adenosyl-L-methionine = N(6),N(6),N(6)-trimethyl-L-lysyl-[protein] + 3 S-adenosyl-L-homocysteine + 3 H(+). Functionally, methylates ribosomal protein L11. The polypeptide is Ribosomal protein L11 methyltransferase (Vibrio vulnificus (strain YJ016)).